Reading from the N-terminus, the 351-residue chain is MSNITDPQMWDYDGDPNFTGMPPIDEDYRPCRLETETLNKYVVIVTYALVFLLSLLGNSLVMLVILYSRVGRSVTDVYLLNLALADLLFALTLPIWAVSKVNGWIFGTLLCKVVSLLKEVNFYSGILLLACISVDRYLAIVHATRTLTQKRHLVKFVCLSCWGLSMILSLPFFLFRQAYHPKNSSPVCYEVLGNDTAKWRMVLRILPHTFGFIVPLFVMLFCYGFALCTLFKAHMGQKHRAMRVIFAVVLIFLLCWLPYNLVLLADTLMRTQLIKESCERRNDIGWALDATEILGFLHSCLNPIIYAFIGQNFRHGFLKILAMHGLVSKEFLARHHVTSYTSSSVNVSSNL.

Topologically, residues 1–46 are extracellular; sequence MSNITDPQMWDYDGDPNFTGMPPIDEDYRPCRLETETLNKYVVIVT. Residue Asn3 is glycosylated (N-linked (GlcNAc...) asparagine). The helical transmembrane segment at 47–67 threads the bilayer; it reads YALVFLLSLLGNSLVMLVILY. The Cytoplasmic segment spans residues 68 to 76; the sequence is SRVGRSVTD. The chain crosses the membrane as a helical span at residues 77-97; the sequence is VYLLNLALADLLFALTLPIWA. The Extracellular segment spans residues 98–112; that stretch reads VSKVNGWIFGTLLCK. A disulfide bridge links Cys111 with Cys188. Residues 113-133 form a helical membrane-spanning segment; it reads VVSLLKEVNFYSGILLLACIS. Residues 134–154 are Cytoplasmic-facing; that stretch reads VDRYLAIVHATRTLTQKRHLV. Residues 155–175 traverse the membrane as a helical segment; the sequence is KFVCLSCWGLSMILSLPFFLF. Topologically, residues 176 to 209 are extracellular; it reads RQAYHPKNSSPVCYEVLGNDTAKWRMVLRILPHT. Residue Asn194 is glycosylated (N-linked (GlcNAc...) asparagine). Residues 210–230 traverse the membrane as a helical segment; that stretch reads FGFIVPLFVMLFCYGFALCTL. At 231–243 the chain is on the cytoplasmic side; that stretch reads FKAHMGQKHRAMR. Residues 244-264 form a helical membrane-spanning segment; sequence VIFAVVLIFLLCWLPYNLVLL. The Extracellular segment spans residues 265 to 289; the sequence is ADTLMRTQLIKESCERRNDIGWALD. A helical membrane pass occupies residues 290-310; it reads ATEILGFLHSCLNPIIYAFIG. The Cytoplasmic segment spans residues 311–351; the sequence is QNFRHGFLKILAMHGLVSKEFLARHHVTSYTSSSVNVSSNL.

Belongs to the G-protein coupled receptor 1 family. In terms of assembly, interacts with IL8. Interacts with GNAI2.

It is found in the cell membrane. Functionally, receptor to interleukin-8, which is a powerful neutrophils chemotactic factor. Binding of IL-8 to the receptor causes activation of neutrophils. This response is mediated via a G-protein that activates a phosphatidylinositol-calcium second messenger system. The protein is C-X-C chemokine receptor type 1 (CXCR1) of Pongo pygmaeus (Bornean orangutan).